Consider the following 274-residue polypeptide: Mitochondrial S-adenosylmethionine carrier protein (274 aa).

Solcar repeat units lie at residues 4–77 (PGFV…VKWF), 86–168 (LTPM…LKAL), and 177–265 (VDSW…THSL). 6 helical membrane passes run 5–25 (GFVAALVAGGVAGVSVDLILF), 49–69 (IYAGVPSAAIGSFPNAAAFFI), 85–105 (YLTPMKHMLAASAGEVVACLI), 142–162 (RGYKSTVLREIPFSLVQFPLW), 182–202 (SAVCGAFAGGFAAAVTTPLDV), and 238–258 (FAGVFPRMAAISLGGFIFLGA).

Belongs to the mitochondrial carrier (TC 2.A.29) family. In terms of tissue distribution, widely expressed. Highly expressed in testis, with moderate expression in brain, heart, kidney, lung, skeletal muscle, pancreas, small intestine and liver, and low expression in spleen.

It localises to the mitochondrion inner membrane. The catalysed reaction is S-adenosyl-L-homocysteine(out) + S-adenosyl-L-methionine(in) = S-adenosyl-L-homocysteine(in) + S-adenosyl-L-methionine(out). Its activity is regulated as follows. Strongly inhibited by tannic acid and Bromocresol Purple. Mitochondrial S-adenosyl-L-methionine/S-adenosyl-L-homocysteine antiporter. Mediates the exchange of cytosolic S-adenosyl-L-methionine, the predominant methyl-group donor for macromolecule methylation processes, for mitochondrial S-adenosylhomocysteine(SAH), a by-product of methylation reactions. This chain is Mitochondrial S-adenosylmethionine carrier protein, found in Homo sapiens (Human).